The primary structure comprises 256 residues: MLSRVVLSAAAAAAPSLKNAALLGPGVLQATRIFHTGQPSLAPVPPLPEHGGKVRFGLIPEEFFQFLYPKTGVTGPYVLGTGLILYLLSKEIYVITPETFSAISTIGFLVYIVKKYGASVGEFADKLNEQKIAQLEEVKQASIKQIQDAIDMEKSQQALVQKRHYLFDVQRNNIAMALEVTYRERLHRVYREVKNRLDYHISVQNMMRQKEQEHMINWVEKRVVQSISAQQEKETIAKCIADLKLLSKKAQAQPVM.

The N-terminal 42 residues, 1-42 (MLSRVVLSAAAAAAPSLKNAALLGPGVLQATRIFHTGQPSLA), are a transit peptide targeting the mitochondrion. Position 131 is an N6-succinyllysine (K131). 6 positions are modified to N6-acetyllysine: K139, K154, K162, K221, K233, and K244.

This sequence belongs to the eukaryotic ATPase B chain family. In terms of assembly, component of the ATP synthase complex composed at least of ATP5F1A/subunit alpha, ATP5F1B/subunit beta, ATP5MC1/subunit c (homooctomer), MT-ATP6/subunit a, MT-ATP8/subunit 8, ATP5ME/subunit e, ATP5MF/subunit f, ATP5MG/subunit g, ATP5MK/subunit k, ATP5MJ/subunit j, ATP5F1C/subunit gamma, ATP5F1D/subunit delta, ATP5F1E/subunit epsilon, ATP5PF/subunit F6, ATP5PB/subunit b, ATP5PD/subunit d, ATP5PO/subunit OSCP. ATP synthase complex consists of a soluble F(1) head domain (subunits alpha(3) and beta(3)) - the catalytic core - and a membrane F(0) domain - the membrane proton channel (subunits c, a, 8, e, f, g, k and j). These two domains are linked by a central stalk (subunits gamma, delta, and epsilon) rotating inside the F1 region and a stationary peripheral stalk (subunits F6, b, d, and OSCP).

It localises to the mitochondrion. It is found in the mitochondrion inner membrane. Its function is as follows. Subunit b, of the mitochondrial membrane ATP synthase complex (F(1)F(0) ATP synthase or Complex V) that produces ATP from ADP in the presence of a proton gradient across the membrane which is generated by electron transport complexes of the respiratory chain. ATP synthase complex consist of a soluble F(1) head domain - the catalytic core - and a membrane F(1) domain - the membrane proton channel. These two domains are linked by a central stalk rotating inside the F(1) region and a stationary peripheral stalk. During catalysis, ATP synthesis in the catalytic domain of F(1) is coupled via a rotary mechanism of the central stalk subunits to proton translocation. In vivo, can only synthesize ATP although its ATP hydrolase activity can be activated artificially in vitro. Part of the complex F(0) domain. Part of the complex F(0) domain and the peripheric stalk, which acts as a stator to hold the catalytic alpha(3)beta(3) subcomplex and subunit a/ATP6 static relative to the rotary elements. The polypeptide is ATP synthase peripheral stalk subunit b, mitochondrial (Bos taurus (Bovine)).